The sequence spans 320 residues: Glyoxylate/hydroxypyruvate reductase B (320 aa).

Active-site residues include Arg233 and Glu262. The Proton donor role is filled by His281.

The protein belongs to the D-isomer specific 2-hydroxyacid dehydrogenase family. GhrB subfamily. As to quaternary structure, homodimer.

It is found in the cytoplasm. The enzyme catalyses glycolate + NADP(+) = glyoxylate + NADPH + H(+). It catalyses the reaction (R)-glycerate + NAD(+) = 3-hydroxypyruvate + NADH + H(+). It carries out the reaction (R)-glycerate + NADP(+) = 3-hydroxypyruvate + NADPH + H(+). Its function is as follows. Catalyzes the NADPH-dependent reduction of glyoxylate and hydroxypyruvate into glycolate and glycerate, respectively. The polypeptide is Glyoxylate/hydroxypyruvate reductase B (Pectobacterium atrosepticum (strain SCRI 1043 / ATCC BAA-672) (Erwinia carotovora subsp. atroseptica)).